Reading from the N-terminus, the 600-residue chain is Prostaglandin G/H synthase 1 (600 aa).

A signal peptide spans 1–24 (MSRQSISLRFPLLLLLLSPSPVFS). One can recognise an EGF-like domain in the interval 32–70 (PVNPCCYYPCQHQGICVRFGLDRYQCDCTRTGYSGPNCT). 4 disulfide bridges follow: cysteine 36–cysteine 47, cysteine 37–cysteine 159, cysteine 41–cysteine 57, and cysteine 59–cysteine 69. An N-linked (GlcNAc...) asparagine glycan is attached at asparagine 68. Transmembrane regions (helical) follow at residues 74–82 (IWTWLRTTL), 86–92 (PSFIHFL), 97–105 (RWLWDFVNA), and 108–122 (IRDTLMRLVLTVRSN). Residue asparagine 144 is glycosylated (N-linked (GlcNAc...) asparagine). Residue histidine 207 is the Proton acceptor of the active site. Tyrosine 385 (for cyclooxygenase activity) is an active-site residue. A heme b-binding site is contributed by histidine 388. N-linked (GlcNAc...) asparagine glycosylation is present at asparagine 410. Residues cysteine 569 and cysteine 575 are joined by a disulfide bond.

The protein belongs to the prostaglandin G/H synthase family. Homodimer. It depends on heme b as a cofactor.

Its subcellular location is the endoplasmic reticulum membrane. The protein resides in the microsome membrane. It carries out the reaction (5Z,8Z,11Z,14Z)-eicosatetraenoate + AH2 + 2 O2 = prostaglandin H2 + A + H2O. The catalysed reaction is (5Z,8Z,11Z,14Z)-eicosatetraenoate + 2 O2 = prostaglandin G2. The enzyme catalyses prostaglandin G2 + AH2 = prostaglandin H2 + A + H2O. It catalyses the reaction (9Z,12Z)-octadecadienoate + AH2 + O2 = (9R)-hydroxy-(10E,12Z)-octadecadienoate + A + H2O. It carries out the reaction (9Z,12Z)-octadecadienoate + AH2 + O2 = (9S)-hydroxy-(10E,12Z)-octadecadienoate + A + H2O. The catalysed reaction is (9Z,12Z)-octadecadienoate + AH2 + O2 = (13S)-hydroxy-(9Z,11E)-octadecadienoate + A + H2O. The enzyme catalyses (9Z,12Z)-octadecadienoate + AH2 + O2 = (13R)-hydroxy-(9Z,11E)-octadecadienoate + A + H2O. It participates in lipid metabolism; prostaglandin biosynthesis. With respect to regulation, the cyclooxygenase activity is inhibited by nonsteroidal anti-inflammatory drugs (NSAIDs) including ibuprofen, flurbiprofen, ketoprofen, naproxen, flurbiprofen, anirolac, fenclofenac and diclofenac. Functionally, dual cyclooxygenase and peroxidase that plays an important role in the biosynthesis pathway of prostanoids, a class of C20 oxylipins mainly derived from arachidonate ((5Z,8Z,11Z,14Z)-eicosatetraenoate, AA, C20:4(n-6)), with a particular role in the inflammatory response. The cyclooxygenase activity oxygenates AA to the hydroperoxy endoperoxide prostaglandin G2 (PGG2), and the peroxidase activity reduces PGG2 to the hydroxy endoperoxide prostaglandin H2 (PGH2), the precursor of all 2-series prostaglandins and thromboxanes. This complex transformation is initiated by abstraction of hydrogen at carbon 13 (with S-stereochemistry), followed by insertion of molecular O2 to form the endoperoxide bridge between carbon 9 and 11 that defines prostaglandins. The insertion of a second molecule of O2 (bis-oxygenase activity) yields a hydroperoxy group in PGG2 that is then reduced to PGH2 by two electrons. Involved in the constitutive production of prostanoids in particular in the stomach and platelets. In gastric epithelial cells, it is a key step in the generation of prostaglandins, such as prostaglandin E2 (PGE2), which plays an important role in cytoprotection. In platelets, it is involved in the generation of thromboxane A2 (TXA2), which promotes platelet activation and aggregation, vasoconstriction and proliferation of vascular smooth muscle cells. Can also use linoleate (LA, (9Z,12Z)-octadecadienoate, C18:2(n-6)) as substrate and produce hydroxyoctadecadienoates (HODEs) in a regio- and stereospecific manner, being (9R)-HODE ((9R)-hydroxy-(10E,12Z)-octadecadienoate) and (13S)-HODE ((13S)-hydroxy-(9Z,11E)-octadecadienoate) its major products. In Ovis aries (Sheep), this protein is Prostaglandin G/H synthase 1 (PTGS1).